The sequence spans 153 residues: Endoribonuclease YbeY (153 aa).

Residues H114, H118, and H124 each contribute to the Zn(2+) site.

It belongs to the endoribonuclease YbeY family. It depends on Zn(2+) as a cofactor.

The protein localises to the cytoplasm. Single strand-specific metallo-endoribonuclease involved in late-stage 70S ribosome quality control and in maturation of the 3' terminus of the 16S rRNA. In Shewanella baltica (strain OS155 / ATCC BAA-1091), this protein is Endoribonuclease YbeY.